Here is a 1357-residue protein sequence, read N- to C-terminus: DNA-directed RNA polymerase subunit beta (1357 aa).

Belongs to the RNA polymerase beta chain family. In terms of assembly, the RNAP catalytic core consists of 2 alpha, 1 beta, 1 beta' and 1 omega subunit. When a sigma factor is associated with the core the holoenzyme is formed, which can initiate transcription.

It carries out the reaction RNA(n) + a ribonucleoside 5'-triphosphate = RNA(n+1) + diphosphate. Functionally, DNA-dependent RNA polymerase catalyzes the transcription of DNA into RNA using the four ribonucleoside triphosphates as substrates. In Pseudomonas savastanoi pv. phaseolicola (strain 1448A / Race 6) (Pseudomonas syringae pv. phaseolicola (strain 1448A / Race 6)), this protein is DNA-directed RNA polymerase subunit beta.